The chain runs to 129 residues: Small ribosomal subunit protein uS11 (129 aa).

This sequence belongs to the universal ribosomal protein uS11 family. In terms of assembly, part of the 30S ribosomal subunit. Interacts with proteins S7 and S18. Binds to IF-3.

In terms of biological role, located on the platform of the 30S subunit, it bridges several disparate RNA helices of the 16S rRNA. Forms part of the Shine-Dalgarno cleft in the 70S ribosome. The protein is Small ribosomal subunit protein uS11 of Enterococcus faecalis (strain ATCC 700802 / V583).